Consider the following 220-residue polypeptide: Metalloproteinase inhibitor 2 (220 aa).

Residues 1–26 (MPGAALPSLLAWLAVLLLGRARPADA) form the signal peptide. Residue Cys27 coordinates Zn(2+). Involved in metalloproteinase-binding regions lie at residues 27–30 (CSCS) and 95–96 (TE). Cystine bridges form between Cys27–Cys98, Cys29–Cys127, Cys39–Cys152, Cys154–Cys201, Cys159–Cys164, and Cys172–Cys193. Positions 27-152 (CSCSPIHPQQ…SLNQRYQMGC (126 aa)) constitute an NTR domain.

Belongs to the protease inhibitor I35 (TIMP) family. In terms of processing, the activity of TIMP2 is dependent on the presence of disulfide bonds.

The protein localises to the secreted. Its function is as follows. Complexes with metalloproteinases (such as collagenases) and irreversibly inactivates them by binding to their catalytic zinc cofactor. The sequence is that of Metalloproteinase inhibitor 2 (TIMP2) from Gallus gallus (Chicken).